An 80-amino-acid polypeptide reads, in one-letter code: Acyl carrier protein (80 aa).

A Carrier domain is found at 2 to 77 (SDTLKRLQKI…DALNYIENKI (76 aa)). Serine 37 is subject to O-(pantetheine 4'-phosphoryl)serine.

Belongs to the acyl carrier protein (ACP) family. Post-translationally, 4'-phosphopantetheine is transferred from CoA to a specific serine of apo-ACP by AcpS. This modification is essential for activity because fatty acids are bound in thioester linkage to the sulfhydryl of the prosthetic group.

It is found in the plastid. It localises to the chloroplast. It functions in the pathway lipid metabolism; fatty acid biosynthesis. Its function is as follows. Carrier of the growing fatty acid chain in fatty acid biosynthesis. The chain is Acyl carrier protein from Cylindrotheca sp. (strain N1) (Marine diatom).